Consider the following 394-residue polypeptide: Queuine tRNA-ribosyltransferase (394 aa).

Catalysis depends on D99, which acts as the Proton acceptor. Residues 99–103 (DSGGF), D153, Q195, and G222 contribute to the substrate site. The segment at 253-259 (GVGHPED) is RNA binding. D272 acts as the Nucleophile in catalysis. The tract at residues 277-281 (TRTGR) is RNA binding; important for wobble base 34 recognition. Zn(2+) contacts are provided by C310, C312, C315, and H341.

This sequence belongs to the queuine tRNA-ribosyltransferase family. As to quaternary structure, homodimer. Within each dimer, one monomer is responsible for RNA recognition and catalysis, while the other monomer binds to the replacement base PreQ1. Requires Zn(2+) as cofactor.

The enzyme catalyses 7-aminomethyl-7-carbaguanine + guanosine(34) in tRNA = 7-aminomethyl-7-carbaguanosine(34) in tRNA + guanine. Its pathway is tRNA modification; tRNA-queuosine biosynthesis. Functionally, catalyzes the base-exchange of a guanine (G) residue with the queuine precursor 7-aminomethyl-7-deazaguanine (PreQ1) at position 34 (anticodon wobble position) in tRNAs with GU(N) anticodons (tRNA-Asp, -Asn, -His and -Tyr). Catalysis occurs through a double-displacement mechanism. The nucleophile active site attacks the C1' of nucleotide 34 to detach the guanine base from the RNA, forming a covalent enzyme-RNA intermediate. The proton acceptor active site deprotonates the incoming PreQ1, allowing a nucleophilic attack on the C1' of the ribose to form the product. After dissociation, two additional enzymatic reactions on the tRNA convert PreQ1 to queuine (Q), resulting in the hypermodified nucleoside queuosine (7-(((4,5-cis-dihydroxy-2-cyclopenten-1-yl)amino)methyl)-7-deazaguanosine). The protein is Queuine tRNA-ribosyltransferase of Deinococcus radiodurans (strain ATCC 13939 / DSM 20539 / JCM 16871 / CCUG 27074 / LMG 4051 / NBRC 15346 / NCIMB 9279 / VKM B-1422 / R1).